The following is a 415-amino-acid chain: Corticotropin-releasing factor receptor 1 (415 aa).

The first 24 residues, Met1–Thr24, serve as a signal peptide directing secretion. At Ser25–Lys111 the chain is on the extracellular side. 3 disulfide bridges follow: Cys30/Cys54, Cys44/Cys87, and Cys68/Cys102. N-linked (GlcNAc...) asparagine glycans are attached at residues Asn38, Asn45, Asn78, and Asn90. A helical transmembrane segment spans residues Thr112–Leu142. The Cytoplasmic segment spans residues Arg143 to Cys149. The helical transmembrane segment at Leu150 to Leu174 threads the bilayer. Topologically, residues Thr175 to Arg189 are extracellular. A disulfide bond links Cys188 and Cys258. A helical membrane pass occupies residues Leu190–Val218. Residues Leu219–Lys225 lie on the Cytoplasmic side of the membrane. Residues Leu226–Tyr253 traverse the membrane as a helical segment. At Asp254–Asp269 the chain is on the extracellular side. Residues Phe270–Met295 traverse the membrane as a helical segment. At Thr296 to Thr306 the chain is on the cytoplasmic side. The chain crosses the membrane as a helical span at residues Ile307–Phe331. The Extracellular segment spans residues Val332–Glu338. Residues Ile339 to Ser368 form a helical membrane-spanning segment. Over Glu369–Ile415 the chain is Cytoplasmic.

This sequence belongs to the G-protein coupled receptor 2 family. In terms of assembly, interacts (via N-terminal extracellular domain) with CRF and UCN.

Its subcellular location is the cell membrane. Functionally, G-protein coupled receptor for CRH (corticotropin-releasing factor) and UCN (urocortin). Has high affinity for CRH and UCN. Ligand binding causes a conformation change that triggers signaling via guanine nucleotide-binding proteins (G proteins) and down-stream effectors, such as adenylate cyclase. Promotes the activation of adenylate cyclase, leading to increased intracellular cAMP levels. In Xenopus laevis (African clawed frog), this protein is Corticotropin-releasing factor receptor 1 (crhr1).